Consider the following 170-residue polypeptide: Nicotinamide-nucleotide adenylyltransferase (170 aa).

Belongs to the archaeal NMN adenylyltransferase family.

The protein resides in the cytoplasm. It carries out the reaction beta-nicotinamide D-ribonucleotide + ATP + H(+) = diphosphate + NAD(+). Its pathway is cofactor biosynthesis; NAD(+) biosynthesis; NAD(+) from nicotinamide D-ribonucleotide: step 1/1. The protein is Nicotinamide-nucleotide adenylyltransferase of Methanothrix thermoacetophila (strain DSM 6194 / JCM 14653 / NBRC 101360 / PT) (Methanosaeta thermophila).